The primary structure comprises 437 residues: Protein translocase subunit SecY (437 aa).

Transmembrane regions (helical) follow at residues 19 to 39 (LFTL…IPGV), 69 to 89 (LLQI…SIIL), 122 to 142 (VALA…GALF), 157 to 177 (IFTT…VMWL), 189 to 209 (GMSI…LWAI), 219 to 239 (WIEF…VVFV), 275 to 295 (GVIP…IVQF), 318 to 338 (HIIL…AISF), 378 to 398 (GSLY…GFGA), and 400 to 420 (QNFP…LETV).

Belongs to the SecY/SEC61-alpha family. As to quaternary structure, component of the Sec protein translocase complex. Heterotrimer consisting of SecY, SecE and SecG subunits. The heterotrimers can form oligomers, although 1 heterotrimer is thought to be able to translocate proteins. Interacts with the ribosome. Interacts with SecDF, and other proteins may be involved. Interacts with SecA.

Its subcellular location is the cell membrane. In terms of biological role, the central subunit of the protein translocation channel SecYEG. Consists of two halves formed by TMs 1-5 and 6-10. These two domains form a lateral gate at the front which open onto the bilayer between TMs 2 and 7, and are clamped together by SecE at the back. The channel is closed by both a pore ring composed of hydrophobic SecY resides and a short helix (helix 2A) on the extracellular side of the membrane which forms a plug. The plug probably moves laterally to allow the channel to open. The ring and the pore may move independently. This Streptomyces coelicolor (strain ATCC BAA-471 / A3(2) / M145) protein is Protein translocase subunit SecY.